Consider the following 242-residue polypeptide: RNA polymerase sigma factor for flagellar operon (242 aa).

The Polymerase core binding signature appears at 55 to 68; the sequence is DMQQIGLIALVEAG. A DNA-binding region (H-T-H motif) is located at residues 211-230; sequence LHEIALVLDLTPPRICQLHK.

This sequence belongs to the sigma-70 factor family.

Functionally, sigma factors are initiation factors that promote the attachment of RNA polymerase to specific initiation sites and are then released. This alternative sigma factor is specific for the flagellin gene (fliC) expression. The polypeptide is RNA polymerase sigma factor for flagellar operon (lafS) (Vibrio parahaemolyticus serotype O3:K6 (strain RIMD 2210633)).